The sequence spans 180 residues: UPF0227 protein YcfP (180 aa).

Belongs to the UPF0227 family.

The sequence is that of UPF0227 protein YcfP from Escherichia coli O139:H28 (strain E24377A / ETEC).